We begin with the raw amino-acid sequence, 475 residues long: Phosphoglucosamine mutase (475 aa).

Catalysis depends on Ser126, which acts as the Phosphoserine intermediate. Ser126, Asp265, Asp267, and Asp269 together coordinate Mg(2+). The residue at position 126 (Ser126) is a Phosphoserine.

The protein belongs to the phosphohexose mutase family. Requires Mg(2+) as cofactor. Activated by phosphorylation.

The catalysed reaction is alpha-D-glucosamine 1-phosphate = D-glucosamine 6-phosphate. Catalyzes the conversion of glucosamine-6-phosphate to glucosamine-1-phosphate. The chain is Phosphoglucosamine mutase from Synechococcus sp. (strain ATCC 27144 / PCC 6301 / SAUG 1402/1) (Anacystis nidulans).